A 209-amino-acid polypeptide reads, in one-letter code: Na(+)-translocating NADH-quinone reductase subunit D (209 aa).

Transmembrane regions (helical) follow at residues 42–62, 70–90, 103–123, 131–151, and 178–198; these read LVMTLAVTLVTAFSSFFISLI, VRIIVQMVIIASLVIVVDQIL, VFVGLIITNCIVMGRAEAYAM, FMDGIGNGLGYGVVLVLVGFV, and NGLFLLAPSAFFIIGLLIWGL.

It belongs to the NqrDE/RnfAE family. As to quaternary structure, composed of six subunits; NqrA, NqrB, NqrC, NqrD, NqrE and NqrF.

Its subcellular location is the cell inner membrane. It carries out the reaction a ubiquinone + n Na(+)(in) + NADH + H(+) = a ubiquinol + n Na(+)(out) + NAD(+). Functionally, NQR complex catalyzes the reduction of ubiquinone-1 to ubiquinol by two successive reactions, coupled with the transport of Na(+) ions from the cytoplasm to the periplasm. NqrA to NqrE are probably involved in the second step, the conversion of ubisemiquinone to ubiquinol. This is Na(+)-translocating NADH-quinone reductase subunit D from Yersinia enterocolitica serotype O:8 / biotype 1B (strain NCTC 13174 / 8081).